A 207-amino-acid chain; its full sequence is Small heat shock protein hspG7 (207 aa).

In terms of domain architecture, sHSP spans 30 to 207 (KTIIDILPPM…YSNTIKININ (178 aa)). Composition is skewed to low complexity over residues 84–101 (QQQQ…SSST) and 122–135 (STTS…ATTT). The segment at 84–149 (QQQQLVIEKS…EDENKTKSSD (66 aa)) is disordered. Positions 136–149 (KENKEDENKTKSSD) are enriched in basic and acidic residues.

This sequence belongs to the small heat shock protein (HSP20) family.

The polypeptide is Small heat shock protein hspG7 (hspG7) (Dictyostelium discoideum (Social amoeba)).